Here is a 493-residue protein sequence, read N- to C-terminus: Bifunctional protein GlmU (493 aa).

The tract at residues 1 to 246 is pyrophosphorylase; it reads MTGELDVDGE…SWLVAGINDR (246 aa). UDP-N-acetyl-alpha-D-glucosamine-binding positions include 21 to 24, Lys-35, Gln-88, 93 to 94, 117 to 119, Gly-156, Glu-171, Asn-186, and Asn-244; these read LAAG, GT, and SGD. Position 119 (Asp-119) interacts with Mg(2+). Asn-244 lines the Mg(2+) pocket. The tract at residues 247 to 267 is linker; sequence VQLTAAATELNARIIRRWQLA. Residues 268 to 493 form an N-acetyltransferase region; the sequence is GVTIHDPRTT…DGPADDASDA (226 aa). Residues Arg-349 and Lys-367 each coordinate UDP-N-acetyl-alpha-D-glucosamine. Residue His-379 is the Proton acceptor of the active site. Tyr-382 and Asn-393 together coordinate UDP-N-acetyl-alpha-D-glucosamine. Acetyl-CoA contacts are provided by residues Ala-396, 402–403, Ser-421, and Ala-439; that span reads NY. Residues 470 to 493 form a disordered region; sequence RPGTPEARAAVEAADGPADDASDA.

The protein in the N-terminal section; belongs to the N-acetylglucosamine-1-phosphate uridyltransferase family. This sequence in the C-terminal section; belongs to the transferase hexapeptide repeat family. In terms of assembly, homotrimer. It depends on Mg(2+) as a cofactor.

Its subcellular location is the cytoplasm. It carries out the reaction alpha-D-glucosamine 1-phosphate + acetyl-CoA = N-acetyl-alpha-D-glucosamine 1-phosphate + CoA + H(+). The catalysed reaction is N-acetyl-alpha-D-glucosamine 1-phosphate + UTP + H(+) = UDP-N-acetyl-alpha-D-glucosamine + diphosphate. The protein operates within nucleotide-sugar biosynthesis; UDP-N-acetyl-alpha-D-glucosamine biosynthesis; N-acetyl-alpha-D-glucosamine 1-phosphate from alpha-D-glucosamine 6-phosphate (route II): step 2/2. It functions in the pathway nucleotide-sugar biosynthesis; UDP-N-acetyl-alpha-D-glucosamine biosynthesis; UDP-N-acetyl-alpha-D-glucosamine from N-acetyl-alpha-D-glucosamine 1-phosphate: step 1/1. It participates in bacterial outer membrane biogenesis; LPS lipid A biosynthesis. Functionally, catalyzes the last two sequential reactions in the de novo biosynthetic pathway for UDP-N-acetylglucosamine (UDP-GlcNAc). The C-terminal domain catalyzes the transfer of acetyl group from acetyl coenzyme A to glucosamine-1-phosphate (GlcN-1-P) to produce N-acetylglucosamine-1-phosphate (GlcNAc-1-P), which is converted into UDP-GlcNAc by the transfer of uridine 5-monophosphate (from uridine 5-triphosphate), a reaction catalyzed by the N-terminal domain. The protein is Bifunctional protein GlmU of Clavibacter sepedonicus (Clavibacter michiganensis subsp. sepedonicus).